A 62-amino-acid chain; its full sequence is Delta-theraphotoxin-Cg1a 3 (62 aa).

An N-terminal signal peptide occupies residues 1–21 (MKTSILFVIFSLALVFALSPA). A propeptide spanning residues 22–29 (TEIEETDR) is cleaved from the precursor. 3 disulfides stabilise this stretch: C31/C46, C38/C51, and C45/C58.

The protein belongs to the neurotoxin 10 (Hwtx-1) family. 33 (Jztx-1) subfamily. As to expression, expressed by the venom gland.

The protein resides in the secreted. Functionally, moderately inhibits voltage-gated sodium channels and weakly inhibits voltage-gated potassium channel. Inhibits the inactivation of rat Nav1.2/SCN2A (IC(50)=870 nM), rat Nav1.3/SCN3A (IC(50)=845 nM), rat Nav1.4/SCN4A (IC(50)=339 nM), human Nav1.5/SCN5A (IC(50)=335 nM) and human Nav1.7/SCN9A sodium channels (IC(50)=348 nM). The toxin delays the inactivation of sodium channels without affecting the activation and steady-state inactivation kinetics in the physiological range of voltages. Site-directed mutagenesis of the sodium channel indicates that the toxin interacts with site 3 located at the extracellular S3-S4 linker of domain IV. On potassium channels, it inhibits activation of channels with an IC(50) of 8.05 uM through a voltage sensor-trapping mechanism. It increases muscle contraction in several assays (mouse phrenic nerve-diaphragm, toad heart, rat vas deferens) and is suggested to act both presynaptically and postsynaptically. In Chilobrachys guangxiensis (Chinese earth tiger tarantula), this protein is Delta-theraphotoxin-Cg1a 3.